The primary structure comprises 413 residues: Amino acid transporter AVT3B (413 aa).

At 1–27 (MGLEEQGRAREDTPLLGKGRPLSSKFK) the chain is on the cytoplasmic side. A helical membrane pass occupies residues 28-48 (TFANVFIAIVGAGVLGLPYAF). Residues 49 to 54 (KRTGWL) lie on the Vacuolar side of the membrane. A helical transmembrane segment spans residues 55-75 (MGLLTLFSVAALINHCMMLLV). Residues 76-103 (HIRRKLGVSNIGSFGDLGFAACGNLGRF) are Cytoplasmic-facing. Residues 104-124 (VVDILIILSQAGFCVGYLIFI) traverse the membrane as a helical segment. The Vacuolar segment spans residues 125–145 (GNTLANLSKPTKSTTLMSLRH). Residues 146–166 (LMGVSPKSLYIWGCFPFQLGL) form a helical membrane-spanning segment. The Cytoplasmic segment spans residues 167-174 (NSIKTLTH). Residues 175-195 (LAPLSIFADVVDLGAMAVVIV) form a helical membrane-spanning segment. At 196–207 (EDIKITVVQRPQ) the chain is on the vacuolar side. A helical transmembrane segment spans residues 208–228 (VVAFGGMSVFFYGMGVAVYAF). Residues 229 to 249 (EGVGMVLPLESETKDKDKFGK) are Cytoplasmic-facing. The chain crosses the membrane as a helical span at residues 250–270 (VLALSMLFIAVMYGSFGVLGY). The Vacuolar segment spans residues 271–288 (MAFGDDTMDIITANLGAG). A helical transmembrane segment spans residues 289-309 (VVSSLVQLGLCINLFFTFPLM). Over 310–331 (MNPVFEIVERRFWSGMYCVWLR) the chain is Cytoplasmic. A helical transmembrane segment spans residues 332–352 (WLLVLAVTLVALLVPNFADFL). The Vacuolar portion of the chain corresponds to 353–355 (SLV). Residues 356 to 376 (GSSVCCALGFVLPSLFHLMVF) traverse the membrane as a helical segment. At 377 to 390 (KDEMEWKQRALDVG) the chain is on the cytoplasmic side. A helical transmembrane segment spans residues 391-411 (ILLLGVILGVSGTWSSLTEIF). At 412–413 (QE) the chain is on the vacuolar side.

The protein belongs to the amino acid/polyamine transporter 2 family. Amino acid/auxin permease (AAAP) (TC 2.A.18.8) subfamily. Ubiquitous.

The protein resides in the vacuole membrane. Functionally, translocates preferentially neutral amino acids from the vacuole to the cytoplasm. The chain is Amino acid transporter AVT3B from Arabidopsis thaliana (Mouse-ear cress).